A 201-amino-acid polypeptide reads, in one-letter code: Guanylate kinase (201 aa).

One can recognise a Guanylate kinase-like domain in the interval 7–186 (GVLLVLSSPS…SVEEISSILN (180 aa)). Residue 14–21 (SPSGAGKT) coordinates ATP.

This sequence belongs to the guanylate kinase family.

The protein localises to the cytoplasm. The catalysed reaction is GMP + ATP = GDP + ADP. In terms of biological role, essential for recycling GMP and indirectly, cGMP. The polypeptide is Guanylate kinase (Wolbachia pipientis wMel).